A 210-amino-acid polypeptide reads, in one-letter code: Putative protein-lysine deacylase ABHD14B (210 aa).

The residue at position 2 (Ala-2) is an N-acetylalanine. At Ser-91 the chain carries Phosphoserine. Catalysis depends on charge relay system residues Ser-111, Asp-162, and His-188.

It belongs to the AB hydrolase superfamily. ABHD14 family. In terms of assembly, may interact with TAF1. As to expression, ubiquitous. Detected in spleen, thymus, prostate, testis, ovary, small intestine, colon, peripheral blood leukocyte, heart, placenta, lung, liver, skeletal muscle, pancreas and kidney.

The protein localises to the cytoplasm. Its subcellular location is the nucleus. It carries out the reaction L-lysyl-[protein] + acetyl-CoA = N(6)-acetyl-L-lysyl-[protein] + CoA + H(+). Functionally, acts as an atypical protein-lysine deacetylase in vitro. Catalyzes the deacetylation of lysine residues using CoA as substrate, generating acetyl-CoA and the free amine of protein-lysine residues. Additional experiments are however required to confirm the protein-lysine deacetylase activity in vivo. Has hydrolase activity towards various surrogate p-nitrophenyl (pNp) substrates, such as pNp-butyrate, pNp-acetate and pNp-octanoate in vitro, with a strong preference for pNp-acetate. May activate transcription. This is Putative protein-lysine deacylase ABHD14B from Homo sapiens (Human).